The following is a 514-amino-acid chain: Glucose-1-phosphate adenylyltransferase small subunit 2, chloroplastic/amyloplastic/cytosolic (514 aa).

The transit peptide at 1–64 (MAMAAAMGVA…RRRPLVFSPR (64 aa)) directs the protein to the chloroplast. The disordered stretch occupies residues 35–74 (RPRRPRGVASSSSSSSSAGRRRRPLVFSPRAVSDSKSSQT). A compositionally biased stretch (low complexity) spans 41 to 52 (GVASSSSSSSSA).

It belongs to the bacterial/plant glucose-1-phosphate adenylyltransferase family. Heterotetramer composed of two small and two large subunits. Expressed in leaves.

The protein localises to the plastid. It is found in the chloroplast. Its subcellular location is the amyloplast. It localises to the cytoplasm. The protein resides in the cytosol. The enzyme catalyses alpha-D-glucose 1-phosphate + ATP + H(+) = ADP-alpha-D-glucose + diphosphate. Its pathway is glycan biosynthesis; starch biosynthesis. Activated by 3'phosphoglycerate, inhibited by orthophosphate. Allosteric regulation. Inhibited by inorganic phosphate (Pi). Involved in synthesis of starch. Catalyzes the synthesis of ADP-glucose, a molecule that serves as an activated glycosyl donor for alpha-1,4-glucan synthesis. The chloroplastic isoform 1 is essential for starch synthesis in leaf chloroplasts and the cytosolic isoform 2 for synthesis in seed endosperm. This chain is Glucose-1-phosphate adenylyltransferase small subunit 2, chloroplastic/amyloplastic/cytosolic, found in Oryza sativa subsp. japonica (Rice).